We begin with the raw amino-acid sequence, 126 residues long: MDRRHRFALQAEIWVADHLAAQGGLVLARRWRCRGGEIDLVVRLGGVLCFVEVKARGGNSWDSAGWEAVGAVKQRRLLLAAALFLAAHPELARSVCRFDVALVGRDPGGGVRLVAYIAGAFEGSGR.

Belongs to the UPF0102 family.

This Gloeobacter violaceus (strain ATCC 29082 / PCC 7421) protein is UPF0102 protein gll3754.